The sequence spans 150 residues: UPF0178 protein Ssed_1350 (150 aa).

It belongs to the UPF0178 family.

This Shewanella sediminis (strain HAW-EB3) protein is UPF0178 protein Ssed_1350.